The primary structure comprises 563 residues: Arginine--tRNA ligase (563 aa).

The short motif at 121–131 is the 'HIGH' region element; the sequence is PNIAKPFSIGH.

Belongs to the class-I aminoacyl-tRNA synthetase family. In terms of assembly, monomer.

The protein resides in the cytoplasm. The catalysed reaction is tRNA(Arg) + L-arginine + ATP = L-arginyl-tRNA(Arg) + AMP + diphosphate. The chain is Arginine--tRNA ligase from Streptococcus thermophilus (strain CNRZ 1066).